Reading from the N-terminus, the 318-residue chain is tRNA U34 carboxymethyltransferase (318 aa).

Carboxy-S-adenosyl-L-methionine-binding positions include Lys88, Trp102, Lys107, Gly126, 176–177 (LE), Met192, Tyr196, and Arg311.

The protein belongs to the class I-like SAM-binding methyltransferase superfamily. CmoB family. As to quaternary structure, homotetramer.

The catalysed reaction is carboxy-S-adenosyl-L-methionine + 5-hydroxyuridine(34) in tRNA = 5-carboxymethoxyuridine(34) in tRNA + S-adenosyl-L-homocysteine + H(+). Its function is as follows. Catalyzes carboxymethyl transfer from carboxy-S-adenosyl-L-methionine (Cx-SAM) to 5-hydroxyuridine (ho5U) to form 5-carboxymethoxyuridine (cmo5U) at position 34 in tRNAs. The polypeptide is tRNA U34 carboxymethyltransferase (Pseudomonas putida (strain GB-1)).